Here is a 343-residue protein sequence, read N- to C-terminus: Protein RecA (343 aa).

66–73 (GPESSGKT) is a binding site for ATP.

Belongs to the RecA family.

It localises to the cytoplasm. Its function is as follows. Can catalyze the hydrolysis of ATP in the presence of single-stranded DNA, the ATP-dependent uptake of single-stranded DNA by duplex DNA, and the ATP-dependent hybridization of homologous single-stranded DNAs. It interacts with LexA causing its activation and leading to its autocatalytic cleavage. The sequence is that of Protein RecA from Dechloromonas aromatica (strain RCB).